The chain runs to 270 residues: Sulfur carrier protein FdhD (270 aa).

The Cysteine persulfide intermediate role is filled by Cys-116. Residue 253-258 (FAREGK) coordinates Mo-bis(molybdopterin guanine dinucleotide).

This sequence belongs to the FdhD family.

The protein localises to the cytoplasm. Required for formate dehydrogenase (FDH) activity. Acts as a sulfur carrier protein that transfers sulfur from IscS to the molybdenum cofactor prior to its insertion into FDH. This chain is Sulfur carrier protein FdhD, found in Haemophilus influenzae (strain 86-028NP).